The primary structure comprises 501 residues: Dipeptide and tripeptide permease A (501 aa).

Residues 1-21 lie on the Cytoplasmic side of the membrane; sequence MSTANNKPAESVSLNAFKQPR. The helical transmembrane segment at 22–44 threads the bilayer; sequence AFYLIFSIELWERFGYYGLQGIM. The Periplasmic portion of the chain corresponds to 45 to 59; that stretch reads AVYLVKQLGMSEADS. The helical transmembrane segment at 60–80 threads the bilayer; it reads ITLFSSFSALVYGLVAIGGWL. The Cytoplasmic segment spans residues 81–89; it reads GDKVLGTKR. Residues 90–110 traverse the membrane as a helical segment; the sequence is VIMLGAIVLAIGYALVAWSGH. Residue D111 is a topological domain, periplasmic. The helical transmembrane segment at 112–132 threads the bilayer; that stretch reads AAIVYMGMATIAVGNGLFKAN. Topologically, residues 133–153 are cytoplasmic; it reads PSSLLSTCYDKNDPRLDGAFT. A helical membrane pass occupies residues 154-174; it reads MYYMSINIGSFFSMLATPWLA. Topologically, residues 175-178 are periplasmic; it reads ARFG. A helical transmembrane segment spans residues 179–199; that stretch reads WSVAFALSVVGMVITIINFAF. Residues 200-218 are Cytoplasmic-facing; the sequence is CQKWVKQYGSKPDFAPVHM. Residues 219-239 form a helical membrane-spanning segment; sequence GKLLATIAGVVVLVAIATWLL. Topologically, residues 240 to 246 are periplasmic; the sequence is HNQGIAR. A helical membrane pass occupies residues 247-267; it reads MVLGVVALGIVVIFAKETIGL. At 268–274 the chain is on the cytoplasmic side; sequence KGAARRK. The helical transmembrane segment at 275 to 295 threads the bilayer; that stretch reads MIVAFLLMVEAIVFFVLYSQM. The Periplasmic segment spans residues 296-320; the sequence is PTSLNFFAIRNVEHSILGIAFEPEQ. Residues 321–341 form a helical membrane-spanning segment; the sequence is YQALNPFWIMIGSPILAAIYN. Residues 342-352 are Cytoplasmic-facing; it reads KMGDRLPMPHK. A helical membrane pass occupies residues 353-373; the sequence is FAIGMVLCSGAFLVLPLGAKF. Topologically, residues 374–383 are periplasmic; sequence ASDAGIVSVN. Residues 384–404 traverse the membrane as a helical segment; that stretch reads WLILSYALQSIGELMISGLGL. The Cytoplasmic segment spans residues 405-414; the sequence is AMVAQLVPQR. Residues 415–435 form a helical membrane-spanning segment; that stretch reads LMGFIMGSWFLTTAGAAIIAG. The Periplasmic portion of the chain corresponds to 436–459; it reads KIANLMAVPENVTDPLVSLEVYGH. A helical membrane pass occupies residues 460-480; sequence VFLQIGIVTAVIAALMLLTAP. Over 481 to 501 the chain is Cytoplasmic; that stretch reads KLNRMTQDDSADLKARETAAA.

This sequence belongs to the major facilitator superfamily. Proton-dependent oligopeptide transporter (POT/PTR) (TC 2.A.17) family. DtpA subfamily.

The protein resides in the cell inner membrane. In terms of biological role, proton-dependent permease that transports di- and tripeptides. The sequence is that of Dipeptide and tripeptide permease A from Klebsiella pneumoniae (strain 342).